A 149-amino-acid polypeptide reads, in one-letter code: Transthyretin (149 aa).

An N-terminal signal peptide occupies residues 1–20 (MAFHSLLLLCLAGLLFVSEA). Cysteine 32 carries the post-translational modification Sulfocysteine. An L-thyroxine-binding site is contributed by lysine 37. Position 64 is a 4-carboxyglutamate (glutamate 64). L-thyroxine-binding residues include glutamate 76 and serine 139.

It belongs to the transthyretin family. In terms of assembly, homotetramer. Dimer of dimers. In the homotetramer, subunits assemble around a central channel that can accommodate two ligand molecules. Interacts with RBP4. In terms of processing, sulfonation of the reactive cysteine Cys-32 enhances the stability of the native conformation of TTR, avoiding misassembly of the protein leading to amyloid formation. Detected in plasma (at protein level). Detected in liver.

Its subcellular location is the secreted. In terms of biological role, thyroid hormone-binding protein. Probably transports thyroxine from the bloodstream to the brain. This chain is Transthyretin (TTR), found in Petaurus breviceps (Australian sugar glider).